The following is a 307-amino-acid chain: Ribosomal RNA small subunit methyltransferase H (307 aa).

S-adenosyl-L-methionine-binding positions include G33–H35, D52, L83, D97, and Q104.

It belongs to the methyltransferase superfamily. RsmH family.

The protein localises to the cytoplasm. The enzyme catalyses cytidine(1402) in 16S rRNA + S-adenosyl-L-methionine = N(4)-methylcytidine(1402) in 16S rRNA + S-adenosyl-L-homocysteine + H(+). Functionally, specifically methylates the N4 position of cytidine in position 1402 (C1402) of 16S rRNA. The chain is Ribosomal RNA small subunit methyltransferase H from Campylobacter fetus subsp. fetus (strain 82-40).